Consider the following 270-residue polypeptide: SPbeta prophage-derived DNA ligase-like protein LigB (270 aa).

Residue Lys25 is the N6-AMP-lysine intermediate of the active site.

Belongs to the ATP-dependent DNA ligase family.

This Bacillus subtilis (strain 168) protein is SPbeta prophage-derived DNA ligase-like protein LigB (ligB).